We begin with the raw amino-acid sequence, 334 residues long: uncharacterized protein (334 aa).

Belongs to the MG414/MG415 family.

This is an uncharacterized protein from Mycoplasma pneumoniae (strain ATCC 29342 / M129 / Subtype 1) (Mycoplasmoides pneumoniae).